The primary structure comprises 265 residues: tRNA pseudouridine synthase A (265 aa).

Catalysis depends on Asp53, which acts as the Nucleophile. Tyr111 lines the substrate pocket.

Belongs to the tRNA pseudouridine synthase TruA family. Homodimer.

It catalyses the reaction uridine(38/39/40) in tRNA = pseudouridine(38/39/40) in tRNA. Its function is as follows. Formation of pseudouridine at positions 38, 39 and 40 in the anticodon stem and loop of transfer RNAs. The sequence is that of tRNA pseudouridine synthase A from Acinetobacter baumannii (strain SDF).